A 170-amino-acid polypeptide reads, in one-letter code: Small ribosomal subunit protein eS7 (170 aa).

Belongs to the eukaryotic ribosomal protein eS7 family. In terms of assembly, component of the small ribosomal subunit.

The protein localises to the cytoplasm. The chain is Small ribosomal subunit protein eS7 (RPS7) from Encephalitozoon cuniculi (strain GB-M1) (Microsporidian parasite).